Consider the following 27-residue polypeptide: Kunitz-type serine protease inhibitor 3 (27 aa).

Residues 1-27 (EVHNFACLGKPDPGGCAHYIYRRYYYV) enclose the BPTI/Kunitz inhibitor domain.

The protein localises to the secreted. Its function is as follows. Inhibits bovine trypsin and human neutrophil elastase. In Rhipicephalus microplus (Cattle tick), this protein is Kunitz-type serine protease inhibitor 3.